We begin with the raw amino-acid sequence, 214 residues long: Proteasome subunit beta type-6 (214 aa).

The propeptide at 1 to 14 (MEAPEWLDNAVDLG) is removed in mature form. T15 functions as the Nucleophile in the catalytic mechanism.

Belongs to the peptidase T1B family. As to quaternary structure, the 26S proteasome consists of a 20S proteasome core and two 19S regulatory subunits. The 20S proteasome core is composed of 28 subunits that are arranged in four stacked rings, resulting in a barrel-shaped structure. The two end rings are each formed by seven alpha subunits, and the two central rings are each formed by seven beta subunits. The catalytic chamber with the active sites is on the inside of the barrel.

Its subcellular location is the cytoplasm. The protein localises to the nucleus. It catalyses the reaction Cleavage of peptide bonds with very broad specificity.. In terms of biological role, the proteasome is a multicatalytic proteinase complex which is characterized by its ability to cleave peptides with Arg, Phe, Tyr, Leu, and Glu adjacent to the leaving group at neutral or slightly basic pH. The proteasome has an ATP-dependent proteolytic activity. This is Proteasome subunit beta type-6 (psmB6) from Dictyostelium discoideum (Social amoeba).